Consider the following 204-residue polypeptide: Proteasome subunit beta type-3-B (204 aa).

It belongs to the peptidase T1B family. Component of the 20S core complex of the 26S proteasome. The 26S proteasome is composed of a core protease (CP), known as the 20S proteasome, capped at one or both ends by the 19S regulatory particle (RP/PA700). The 20S proteasome core is composed of 28 subunits that are arranged in four stacked rings, resulting in a barrel-shaped structure. The two end rings are each formed by seven alpha subunits, and the two central rings are each formed by seven beta subunits. The catalytic chamber with the active sites is on the inside of the barrel.

It localises to the cytoplasm. The protein resides in the nucleus. Functionally, non-catalytic component of the proteasome, a multicatalytic proteinase complex which is characterized by its ability to cleave peptides with Arg, Phe, Tyr, Leu, and Glu adjacent to the leaving group at neutral or slightly basic pH. The proteasome has an ATP-dependent proteolytic activity. This Arabidopsis thaliana (Mouse-ear cress) protein is Proteasome subunit beta type-3-B (PBC2).